The following is a 238-amino-acid chain: Ribosomal RNA small subunit methyltransferase G (238 aa).

S-adenosyl-L-methionine-binding positions include G77, F82, A128–E129, and R147.

Belongs to the methyltransferase superfamily. RNA methyltransferase RsmG family.

Its subcellular location is the cytoplasm. Functionally, specifically methylates the N7 position of guanine in position 535 of 16S rRNA. The polypeptide is Ribosomal RNA small subunit methyltransferase G (Lysinibacillus sphaericus (strain C3-41)).